The sequence spans 168 residues: Endoribonuclease YbeY (168 aa).

Residues histidine 119, histidine 123, and histidine 129 each contribute to the Zn(2+) site.

The protein belongs to the endoribonuclease YbeY family. It depends on Zn(2+) as a cofactor.

The protein localises to the cytoplasm. Its function is as follows. Single strand-specific metallo-endoribonuclease involved in late-stage 70S ribosome quality control and in maturation of the 3' terminus of the 16S rRNA. The polypeptide is Endoribonuclease YbeY (Gluconobacter oxydans (strain 621H) (Gluconobacter suboxydans)).